The primary structure comprises 554 residues: MAYYRNPSDVTALPAWQALSKHRQSMQNFSMREAFNSDPQRFSQFTLSSAGLFLDYSKNLITTETRDLLVSLAGEVNLKDAIKAQYDGELVNSSEGRPALHTALRRPVGDKLKVNGVDVMPDVHRVLNQMTELVGRIHDGLWRGYTEKPITDVVNIGIGGSFLGPELVSEALVAYAHKGVRCHYLANIDGSEFHELSMKIRAETTLFIVSSKSFNTLETLKNAQAARAWYLAQGGSEVELHRHFIAVSSNNAAAVAFGIREENIFPMWDWVGGRYSLWSAIGLPIALAIGMSNFKELLSGAYTMDQHFQSAPFEQNMPVLLALLGVWYGNFWNAQSHAILPYDHYLRNITKHLQQLDMESNGKSVRQDGTPTSTDTGPVIWGGVGANGQHAYHQLLHQGTQMIPADFIVPIVSFNPVADHHQWLYANCLSQSQALMMGKTRAEAEAELREKGMSEEEVQKLAPHKVIPGNRPSNTLVVERISPRRLGALVAMYEHKVFVQSVIWGTNAFDQWGVELGKEMGKAVYQRLTGGTEEPADDASTQGLINYFRGRHRG.

Glutamate 359 serves as the catalytic Proton donor. Catalysis depends on residues histidine 390 and lysine 518.

It belongs to the GPI family.

It localises to the cytoplasm. It catalyses the reaction alpha-D-glucose 6-phosphate = beta-D-fructose 6-phosphate. It participates in carbohydrate biosynthesis; gluconeogenesis. The protein operates within carbohydrate degradation; glycolysis; D-glyceraldehyde 3-phosphate and glycerone phosphate from D-glucose: step 2/4. Its function is as follows. Catalyzes the reversible isomerization of glucose-6-phosphate to fructose-6-phosphate. This Pseudomonas savastanoi pv. phaseolicola (strain 1448A / Race 6) (Pseudomonas syringae pv. phaseolicola (strain 1448A / Race 6)) protein is Glucose-6-phosphate isomerase.